A 379-amino-acid chain; its full sequence is Probable leucine aminopeptidase TRV_05286 (379 aa).

A signal peptide spans 1-18 (MKIATLAVVSAFAATAIA). Positions 182 and 201 each coordinate Zn(2+). Residues Asn202 and Asn226 are each glycosylated (N-linked (GlcNAc...) asparagine). Residues Glu240 and Asp267 each coordinate Zn(2+). Cysteines 312 and 316 form a disulfide. His345 contributes to the Zn(2+) binding site.

The protein belongs to the peptidase M28 family. M28E subfamily. In terms of assembly, monomer. The cofactor is Zn(2+).

The protein localises to the secreted. Its function is as follows. Probable extracellular aminopeptidase which contributes to pathogenicity. The chain is Probable leucine aminopeptidase TRV_05286 from Trichophyton verrucosum (strain HKI 0517).